Here is a 375-residue protein sequence, read N- to C-terminus: Succinyl-diaminopimelate desuccinylase (375 aa).

His66 provides a ligand contact to Zn(2+). The active site involves Asp68. Residue Asp99 coordinates Zn(2+). Glu133 acts as the Proton acceptor in catalysis. Glu134, Glu162, and His348 together coordinate Zn(2+).

This sequence belongs to the peptidase M20A family. DapE subfamily. As to quaternary structure, homodimer. It depends on Zn(2+) as a cofactor. Co(2+) is required as a cofactor.

It catalyses the reaction N-succinyl-(2S,6S)-2,6-diaminopimelate + H2O = (2S,6S)-2,6-diaminopimelate + succinate. The protein operates within amino-acid biosynthesis; L-lysine biosynthesis via DAP pathway; LL-2,6-diaminopimelate from (S)-tetrahydrodipicolinate (succinylase route): step 3/3. In terms of biological role, catalyzes the hydrolysis of N-succinyl-L,L-diaminopimelic acid (SDAP), forming succinate and LL-2,6-diaminopimelate (DAP), an intermediate involved in the bacterial biosynthesis of lysine and meso-diaminopimelic acid, an essential component of bacterial cell walls. This is Succinyl-diaminopimelate desuccinylase from Escherichia coli O139:H28 (strain E24377A / ETEC).